The sequence spans 730 residues: MSGVLNDVRDYTEGYLQVLWQNRLYVYSTAAVLIGVWFTVNMLFKKKKMVHPVSPLASKSVKKQEPASEAKKVIYVSGVKVFYGSQTGTAKGFAKELAEDVIAQGIQCEVIDMKDFDPEDRLAEECTSKIICVFLVATYTDGQPTESAEWFCKWLEEASTDFRYGKTYLKGMRYAVFGLGNSVYVGHFNTVSKSIDKWLWMLSAARIMTRGEGDCNVVKSRHGSVQADFQVWKGKFLNRLQALAKGEKKACSGNCKKASCKNKKKHKEEAEDNHSLAEKNNSEEELMESSSDEESSSEDEKSHGSVIDMEDLGNVMNHMKKAKQRMEEDEEDSQRVKQNGERKSECEEERREMITPALRDSLTKQGYKLIGSHSGVKLRRWTKSMLRGRGGCYKHTFYGIESHRCMETTPSLACANKCVFCWRHHTNPVGTEWRWKMDPAEKIIQEAMENHRNMIRQFRGVPGVRPERFEEGLTVKHCALSLVGEPIMYPEINSFLKLLHQQNISSFLVTNAQFPEEIRSLVPVTQLYVSVDASTKDSLKKIDRPLFKDFWQRFLDSLRALGEKQQRTVYRLTLVKAWNVDELKAYADLIALGQPDFIEVKGVTYCGESSASSLTMANVPWHEEVIYFVQQLANLLPDYEIACEHEHSNCLLLANHKFKVDGEWWTWIDYERFQELIQQYEESGGTKNFSAMDYMAKTPSWAVFGAGERGFDPTDTRFQRKNKTKDISGC.

In terms of domain architecture, Flavodoxin-like spans valine 79–leucine 237. FMN-binding positions include serine 85 to threonine 89 and valine 176 to methionine 208. The interval glycine 253–arginine 351 is disordered. A compositionally biased stretch (basic and acidic residues) spans lysine 267–serine 282. Residues glutamate 283 to serine 297 are compositionally biased toward acidic residues. Positions serine 333 to arginine 351 are enriched in basic and acidic residues. In terms of domain architecture, Radical SAM core spans tyrosine 398–alanine 642. Residues cysteine 414, cysteine 418, and cysteine 421 each contribute to the [4Fe-4S] cluster site.

It belongs to the TYW1 family. The cofactor is [4Fe-4S] cluster.

It catalyses the reaction N(1)-methylguanosine(37) in tRNA(Phe) + pyruvate + S-adenosyl-L-methionine = 4-demethylwyosine(37) in tRNA(Phe) + 5'-deoxyadenosine + L-methionine + CO2 + H2O. Its pathway is tRNA modification; wybutosine-tRNA(Phe) biosynthesis. Its function is as follows. Probable component of the wybutosine biosynthesis pathway. Wybutosine is a hyper modified guanosine with a tricyclic base found at the 3'-position adjacent to the anticodon of eukaryotic phenylalanine tRNA. Catalyzes the condensation of N-methylguanine with 2 carbon atoms from pyruvate to form the tricyclic 4-demethylwyosine, an intermediate in wybutosine biosynthesis. The chain is S-adenosyl-L-methionine-dependent tRNA 4-demethylwyosine synthase TYW1 (tyw1) from Danio rerio (Zebrafish).